The primary structure comprises 187 residues: Probable nicotinate-nucleotide adenylyltransferase (187 aa).

It belongs to the NadD family.

It carries out the reaction nicotinate beta-D-ribonucleotide + ATP + H(+) = deamido-NAD(+) + diphosphate. It functions in the pathway cofactor biosynthesis; NAD(+) biosynthesis; deamido-NAD(+) from nicotinate D-ribonucleotide: step 1/1. In terms of biological role, catalyzes the reversible adenylation of nicotinate mononucleotide (NaMN) to nicotinic acid adenine dinucleotide (NaAD). The sequence is that of Probable nicotinate-nucleotide adenylyltransferase from Anaeromyxobacter sp. (strain K).